The sequence spans 110 residues: U12-hexatoxin-Hi1a (110 aa).

Residues 1–18 (MRVALVFLVLSILAATHG) form the signal peptide. Intrachain disulfides connect Cys-72/Cys-86, Cys-79/Cys-91, and Cys-85/Cys-104.

Expressed by the venom gland.

Its subcellular location is the secreted. Probable ion channel inhibitor. The chain is U12-hexatoxin-Hi1a from Hadronyche infensa (Fraser island funnel-web spider).